A 205-amino-acid polypeptide reads, in one-letter code: Holliday junction branch migration complex subunit RuvA (205 aa).

Residues 1-64 (MIGRLRGLLV…EDAQLLYGFI (64 aa)) form a domain I region. The domain II stretch occupies residues 65–143 (TKQERALFRL…SLMEASHGNE (79 aa)). Residues 144–156 (REFVLQSNYTPAP) form a flexible linker region. The segment at 157–205 (VVNTAEEDAISALLALGYKPAQASKAVSSVFEEGMDSETLIKASLKSML) is domain III.

The protein belongs to the RuvA family. In terms of assembly, homotetramer. Forms an RuvA(8)-RuvB(12)-Holliday junction (HJ) complex. HJ DNA is sandwiched between 2 RuvA tetramers; dsDNA enters through RuvA and exits via RuvB. An RuvB hexamer assembles on each DNA strand where it exits the tetramer. Each RuvB hexamer is contacted by two RuvA subunits (via domain III) on 2 adjacent RuvB subunits; this complex drives branch migration. In the full resolvosome a probable DNA-RuvA(4)-RuvB(12)-RuvC(2) complex forms which resolves the HJ.

Its subcellular location is the cytoplasm. In terms of biological role, the RuvA-RuvB-RuvC complex processes Holliday junction (HJ) DNA during genetic recombination and DNA repair, while the RuvA-RuvB complex plays an important role in the rescue of blocked DNA replication forks via replication fork reversal (RFR). RuvA specifically binds to HJ cruciform DNA, conferring on it an open structure. The RuvB hexamer acts as an ATP-dependent pump, pulling dsDNA into and through the RuvAB complex. HJ branch migration allows RuvC to scan DNA until it finds its consensus sequence, where it cleaves and resolves the cruciform DNA. This chain is Holliday junction branch migration complex subunit RuvA, found in Shewanella loihica (strain ATCC BAA-1088 / PV-4).